The following is a 43-amino-acid chain: uncharacterized protein (43 aa).

This is an uncharacterized protein from Escherichia coli (Bacteriophage T3).